A 376-amino-acid chain; its full sequence is MPIPIIAHIAQFKYEHLITHWAQYTKAAIAVSTIAAFKFWTSGRTTTWERKMNGMVVMVTGGSSGIGQVVVEKLASLGAQVVILLRTEPDQFTVDYIMDLRKRTKNQLIYTEVCDLSSMLSVRKFATKWIDCTPIRRLDMIVLCSGVLLPPFMDRQTTEEGVELQWATNFLGPYQLLRILRPVIYGQPGHREVRIVAATCSSYILGNIDFNDLDLSNHPYPRKSPWKVVGNAKLALMTYLYDFQKKAEAHERPDKMPCNLHTIMANPGVVRTPGFRRVVSFGKVWGLFLYLLLWPFWWLLLKGTIHGAQSFFHAICSPEFASITQPVLVNECSIVEYSRKEITDPEFAEKLIKAADAQIDEVEKQYKKKKIKKSKK.

Over 1–280 (MPIPIIAHIA…RTPGFRRVVS (280 aa)) the chain is Lumenal. Ile66, Asp115, Arg178, Lys233, Val270, and Thr272 together coordinate NADP(+). Lys233 acts as the Lowers pKa of active site Tyr in catalysis. The helical transmembrane segment at 281 to 301 (FGKVWGLFLYLLLWPFWWLLL) threads the bilayer. Residues 302-376 (KGTIHGAQSF…KKKKIKKSKK (75 aa)) are Cytoplasmic-facing.

This sequence belongs to the short-chain dehydrogenases/reductases (SDR) family.

It localises to the cytoplasm. Its subcellular location is the endoplasmic reticulum membrane. Its function is as follows. May be involved in lipid metabolism. This is an uncharacterized protein from Schizosaccharomyces pombe (strain 972 / ATCC 24843) (Fission yeast).